Consider the following 610-residue polypeptide: tRNA uridine 5-carboxymethylaminomethyl modification enzyme MnmG (610 aa).

Position 14-19 (14-19 (GAGHAG)) interacts with FAD. 274-288 (GPRYCPSIEDKIVKF) is an NAD(+) binding site.

It belongs to the MnmG family. Homodimer. Heterotetramer of two MnmE and two MnmG subunits. FAD serves as cofactor.

The protein resides in the cytoplasm. Its function is as follows. NAD-binding protein involved in the addition of a carboxymethylaminomethyl (cmnm) group at the wobble position (U34) of certain tRNAs, forming tRNA-cmnm(5)s(2)U34. The polypeptide is tRNA uridine 5-carboxymethylaminomethyl modification enzyme MnmG (Chlamydia trachomatis serovar D (strain ATCC VR-885 / DSM 19411 / UW-3/Cx)).